The sequence spans 273 residues: Alcohol dehydrogenase-related 31 kDa protein (273 aa).

11–34 (YVADCGGIALETCKVLMTKNIAKL) contacts NAD(+). Serine 139 contacts substrate. Residue tyrosine 152 is the Proton acceptor of the active site.

This sequence belongs to the short-chain dehydrogenases/reductases (SDR) family.

This is Alcohol dehydrogenase-related 31 kDa protein (Adhr) from Drosophila immigrans (Fruit fly).